The chain runs to 830 residues: Leucine--tRNA ligase (830 aa).

The 'HIGH' region motif lies at 48–58 (PYPSGAIHMGH). The 'KMSKS' region signature appears at 596-600 (KMSKS). Residue Lys599 participates in ATP binding.

Belongs to the class-I aminoacyl-tRNA synthetase family.

It is found in the cytoplasm. It catalyses the reaction tRNA(Leu) + L-leucine + ATP = L-leucyl-tRNA(Leu) + AMP + diphosphate. The chain is Leucine--tRNA ligase from Helicobacter hepaticus (strain ATCC 51449 / 3B1).